We begin with the raw amino-acid sequence, 319 residues long: Histone-lysine N-methyltransferase set5 (319 aa).

An SET domain is found at 4–141 (YETEIYKVVP…AGEEILTTYI (138 aa)). S316 is modified (phosphoserine). T318 is modified (phosphothreonine).

The protein belongs to the class V-like SAM-binding methyltransferase superfamily.

Its subcellular location is the nucleus. The protein localises to the chromosome. The protein resides in the cytoplasm. It catalyses the reaction L-lysyl-[histone] + S-adenosyl-L-methionine = N(6)-methyl-L-lysyl-[histone] + S-adenosyl-L-homocysteine + H(+). Histone methyltransferase that monomethylates 'Lys-5', 'Lys-8' and 'Lys-12' of histone H4 (H4K5me1, H4K8me1 and H4K12me1, respectively), thereby controlling gene expression and remodeling chromatin structures. Monomethylation of 'Lys-5' of histone H4 (H4K5me1) is required for subsequent acetylation and formation of N6-acetyl-N6-methyllysine (H4K5acme). The polypeptide is Histone-lysine N-methyltransferase set5 (set5) (Schizosaccharomyces pombe (strain 972 / ATCC 24843) (Fission yeast)).